We begin with the raw amino-acid sequence, 512 residues long: Probable capsid protein 4 (512 aa).

The protein belongs to the NCLDV major capsid protein family.

Its subcellular location is the virion. This Acanthamoeba polyphaga mimivirus (APMV) protein is Probable capsid protein 4.